Reading from the N-terminus, the 314-residue chain is 3'-5' exoribonuclease YhaM (314 aa).

The 117-residue stretch at 163 to 279 (HVVSMLDLAK…LHYIDNLDAK (117 aa)) folds into the HD domain.

The protein belongs to the YhaM family.

Its function is as follows. Shows a 3'-5' exoribonuclease activity. The polypeptide is 3'-5' exoribonuclease YhaM (Bacillus thuringiensis (strain Al Hakam)).